Here is a 1509-residue protein sequence, read N- to C-terminus: DNA polymerase alpha catalytic subunit (1509 aa).

A disordered region spans residues 1 to 162 (MNRPKREKKS…KKTKEKKNEI (162 aa)). 2 stretches are compositionally biased toward basic and acidic residues: residues 21–35 (EQIK…RTDQ) and 42–79 (ERKR…RETS). Residues 27–67 (RDGEKRTDQLQEEDDERKRLEQLKEQETEFDKEERKRKNRD) are a coiled coil. A compositionally biased stretch (acidic residues) spans 80–123 (DNEDEDEDEDDDGDNSDDDYSLDEDDEDGGGDGENNDSDQEEAI). The span at 127 to 137 (RKKKRQVKKKS) shows a compositional bias: basic residues. Over residues 138–147 (KKDENGEPKV) the composition is skewed to basic and acidic residues. The span at 148 to 157 (KTPRVKKTKE) shows a compositional bias: basic residues. Coiled-coil stretches lie at residues 234–263 (APDS…LLNK) and 958–989 (LHGL…IQQQ). Residues C1328, C1331, C1355, C1358, C1389, C1392, C1406, and C1411 each coordinate Zn(2+). Residues 1328–1358 (CPYCGQNNEFTGIVKIDSEGKSESGFDCNQC) form a CysA-type zinc finger. The CysB motif signature appears at 1389–1411 (CTECEKVSKNYKETSYRCARPQC).

The protein belongs to the DNA polymerase type-B family.

The protein localises to the nucleus. The catalysed reaction is DNA(n) + a 2'-deoxyribonucleoside 5'-triphosphate = DNA(n+1) + diphosphate. Functionally, polymerase alpha in a complex with DNA primase is a replicative polymerase. This chain is DNA polymerase alpha catalytic subunit (pola1), found in Dictyostelium discoideum (Social amoeba).